Here is a 268-residue protein sequence, read N- to C-terminus: GTP cyclohydrolase FolE2 (268 aa).

Belongs to the GTP cyclohydrolase IV family.

It catalyses the reaction GTP + H2O = 7,8-dihydroneopterin 3'-triphosphate + formate + H(+). Its pathway is cofactor biosynthesis; 7,8-dihydroneopterin triphosphate biosynthesis; 7,8-dihydroneopterin triphosphate from GTP: step 1/1. Its function is as follows. Converts GTP to 7,8-dihydroneopterin triphosphate. The sequence is that of GTP cyclohydrolase FolE2 from Methylococcus capsulatus (strain ATCC 33009 / NCIMB 11132 / Bath).